Here is a 195-residue protein sequence, read N- to C-terminus: Protein Fer3 (195 aa).

2 disordered regions span residues 1–24 and 56–82; these read MQHP…LWGQ and PLVP…RRRV. Positions 63–75 are enriched in low complexity; sequence STNGRANGSSSSS. The 53-residue stretch at 86–138 folds into the bHLH domain; it reads AQRRAANIRERRRMFNLNEAFDKLRRKVPTFAYEKRLSRIETLRLAITYIGFM. Positions 145–175 are disordered; it reads TPSNSHKSRSDVYGSMNGHHQAPPPAIHPHH.

The protein resides in the nucleus. Its function is as follows. Transcription factor that binds to the E-box and functions as inhibitor of transcription. DNA binding requires dimerization with an E protein. Inhibits transcription activation by ASCL1/MASH1 by sequestering E proteins. The polypeptide is Protein Fer3 (fer3) (Drosophila melanogaster (Fruit fly)).